We begin with the raw amino-acid sequence, 273 residues long: Dermonecrotic toxin LapSicTox-alphaIB1b3 (273 aa).

H5 is an active-site residue. Mg(2+)-binding residues include E25 and D27. H41 (nucleophile) is an active-site residue. 2 cysteine pairs are disulfide-bonded: C45–C51 and C47–C190. D85 contributes to the Mg(2+) binding site. N250 carries N-linked (GlcNAc...) asparagine glycosylation.

Belongs to the arthropod phospholipase D family. Class II subfamily. The cofactor is Mg(2+). As to expression, expressed by the venom gland.

Its subcellular location is the secreted. The catalysed reaction is an N-(acyl)-sphingosylphosphocholine = an N-(acyl)-sphingosyl-1,3-cyclic phosphate + choline. The enzyme catalyses an N-(acyl)-sphingosylphosphoethanolamine = an N-(acyl)-sphingosyl-1,3-cyclic phosphate + ethanolamine. It catalyses the reaction a 1-acyl-sn-glycero-3-phosphocholine = a 1-acyl-sn-glycero-2,3-cyclic phosphate + choline. It carries out the reaction a 1-acyl-sn-glycero-3-phosphoethanolamine = a 1-acyl-sn-glycero-2,3-cyclic phosphate + ethanolamine. Functionally, dermonecrotic toxins cleave the phosphodiester linkage between the phosphate and headgroup of certain phospholipids (sphingolipid and lysolipid substrates), forming an alcohol (often choline) and a cyclic phosphate. This toxin acts on sphingomyelin (SM). It may also act on ceramide phosphoethanolamine (CPE), lysophosphatidylcholine (LPC) and lysophosphatidylethanolamine (LPE), but not on lysophosphatidylserine (LPS), and lysophosphatidylglycerol (LPG). It acts by transphosphatidylation, releasing exclusively cyclic phosphate products as second products. Induces dermonecrosis, hemolysis, increased vascular permeability, edema, inflammatory response, and platelet aggregation. The sequence is that of Dermonecrotic toxin LapSicTox-alphaIB1b3 from Loxosceles apachea (Apache recluse spider).